The chain runs to 321 residues: Glucokinase (321 aa).

8-13 (GDVGGT) is an ATP binding site.

It belongs to the bacterial glucokinase family.

It localises to the cytoplasm. It catalyses the reaction D-glucose + ATP = D-glucose 6-phosphate + ADP + H(+). This Shigella dysenteriae serotype 1 (strain Sd197) protein is Glucokinase.